A 394-amino-acid chain; its full sequence is Obg-like ATPase 1 (394 aa).

Positions 25–282 (LKIGIVGLPN…MPPDEAAKYC (258 aa)) constitute an OBG-type G domain. ATP contacts are provided by residues 34–39 (NVGKST), 56–60 (FCTID), and 94–97 (DIAG). Residue 34–39 (NVGKST) participates in GTP binding. Mg(2+) contacts are provided by S38 and T58. The GTP site is built by F129 and N230. Residues 230–231 (NM), M231, and 263–265 (SCA) each bind ATP. Position 263–265 (263–265 (SCA)) interacts with GTP. The 84-residue stretch at 303–386 (HLIYFFTAGP…QDGDIIFFKF (84 aa)) folds into the TGS domain.

Belongs to the TRAFAC class OBG-HflX-like GTPase superfamily. OBG GTPase family. YchF/OLA1 subfamily. In terms of assembly, monomer (Potential). Interacts with GAP1. Mg(2+) is required as a cofactor.

The protein resides in the cell membrane. The protein localises to the cytoplasm. It localises to the cytosol. With respect to regulation, activated by GAP1. Hydrolyzes ATP, and can also hydrolyze GTP with lower efficiency. Has lower affinity for GTP (Potential). Exhibits GTPase activity. Exhibits similar binding affinities and hydrolytic activities toward both GTP and ATP. Binds to the 26 S ribosomal RNA in vitro, but not to the 5.8 S or 18 S rRNA. Confers sensitivity to salinity stress by suppressing the anti-oxidation enzymatic activities and increasing lipid peroxidation thus leading to the accumulation of reactive oxygen species (ROS). The protein is Obg-like ATPase 1 of Oryza sativa subsp. japonica (Rice).